A 693-amino-acid chain; its full sequence is MSTPSLEKIRNIGITAHIDAGKTTTTERILYYTGVSHKIGEVHDGNTTTDYMEQERERGITITSAAVTCEWKDHRINIIDTPGHIDFNIEVNRSLRVLDGAVFIIEGVAGVQPQSETNWRLADRYNVPRVIFINKLDRTGADFYRAFDTLKEKLDIVALPLQLPIGAEDQFLGVVDLVEMKAIIWEGGELGAKFHDEPIPAELAEKAAEYRQNLLDTALAVDDAAMEEYFEKGDVDVATLKRAIKRGTIDGTFRPVLCGTAFKNKGVQPLLDSVIDYLPAPTDLPGIKVAAEEGEDEAADRRRIPAKTDAPFSGLAFKIINDKYGTLTFVRVYSGVLRSGDSVLNTTKGHKERIGRIFQMHADKRAEIKEVFAGDIAAFVGLKDTGTGDTLASQDDPVVLERMAFPVPVIDISVEPKTKEAVEKMTLGLQKLAGEDPSLRLRTDQETGQTILSGMGELHLDIIIDRLRREYNVDCNIGAPQVAYRETISKSHTEVYTHKKQSGGSGQFAEVKIIFEPLERNEGIVFENKVVGGSVPKEYIPAVDKGIRVQAETGVLAGFPTVDFKFSLIDGKYHDVDSSALAFEIAGKACFREGMKKAGPQILEPIMDVEVTTPQDHVGDVVGDLNRRRGMIQNQESSGSTVLVRAQVPLKEMFGYISHLRSMTKGRASFTMQFHHYDPVPRNVADEIMTKSA.

In terms of domain architecture, tr-type G spans 7–282 (EKIRNIGITA…SVIDYLPAPT (276 aa)). GTP contacts are provided by residues 16 to 23 (AHIDAGKT), 80 to 84 (DTPGH), and 134 to 137 (NKLD).

This sequence belongs to the TRAFAC class translation factor GTPase superfamily. Classic translation factor GTPase family. EF-G/EF-2 subfamily.

The protein resides in the cytoplasm. Its function is as follows. Catalyzes the GTP-dependent ribosomal translocation step during translation elongation. During this step, the ribosome changes from the pre-translocational (PRE) to the post-translocational (POST) state as the newly formed A-site-bound peptidyl-tRNA and P-site-bound deacylated tRNA move to the P and E sites, respectively. Catalyzes the coordinated movement of the two tRNA molecules, the mRNA and conformational changes in the ribosome. In Granulibacter bethesdensis (strain ATCC BAA-1260 / CGDNIH1), this protein is Elongation factor G.